Reading from the N-terminus, the 797-residue chain is Short transient receptor potential channel 4-associated protein (797 aa).

Residue A2 is modified to N-acetylalanine. Positions 2–400 (AAAPAAAGAG…VLYVLCVLLM (399 aa)) are interaction with TNFRSF1A.

Component of the DCX(TRPC4AP) E3 ubiquitin ligase complex, at least composed of CUL4A, DDB1, TRPC4AP/TRUSS and RBX1. Interacts with MYC. Constitutively associated with TNFRSF1A. Directly interacts with TRADD, TRAF2, CHUK, IKBKB and IKBKG. Interacts with TRPC1, TRPC4 and TRPC5. Phosphorylated by GSK3B; phosphorylation is required for ubiquitination. In terms of processing, ubiquitinated by a SCF (SKP1-CUL1-F-box protein) E3 ubiquitin-protein ligase containing SKP2, leading to its degradation. Phosphorylation by GSK3B is required for ubiquitination. Widely expressed, with high levels in heart, liver and testis.

The protein localises to the cytoplasm. It is found in the perinuclear region. The protein operates within protein modification; protein ubiquitination. In terms of biological role, substrate-recognition component of a DCX (DDB1-CUL4-X-box) E3 ubiquitin-protein ligase complex required for cell cycle control. The DCX(TRPC4AP) complex specifically mediates the polyubiquitination and subsequent degradation of MYC as part of the DesCEND (destruction via C-end degrons) pathway. The DesCEND (destruction via C-end degrons) pathway recognizes a C-degron located at the extreme C terminus of target proteins, leading to their ubiquitination and degradation. The DCX(TRPC4AP) complex specifically recognizes proteins with an arginine at the minus 3 position (R-3 motif) at the C-terminus, such as MYC, leading to their ubiquitination and degradation. Also participates in the activation of NFKB1 in response to ligation of TNFRSF1A, possibly by linking TNFRSF1A to the IKK signalosome. Involved in JNK activation via its interaction with TRAF2. Also involved in elevation of endoplasmic reticulum Ca(2+) storage reduction in response to CHRM1. This Mus musculus (Mouse) protein is Short transient receptor potential channel 4-associated protein.